The chain runs to 590 residues: RNA-binding protein 47 (590 aa).

Over residues Met1–Lys21 the composition is skewed to polar residues. The interval Met1–Val26 is disordered. 3 RRM domains span residues Cys71–Asp149, Cys151–Pro233, and Lys246–Pro318. Asymmetric dimethylarginine; alternate occurs at positions 396 and 407. 2 positions are modified to omega-N-methylarginine; alternate: Arg396 and Arg407.

The protein belongs to the RRM RBM47 family. As to quaternary structure, homodimer. Interacts with A1CF. Interacts with APOBEC1; form an mRNA editing complex. Interacts with RBPMS.

The protein localises to the nucleus. Its subcellular location is the cytoplasm. Its function is as follows. Single-stranded RNA-binding protein that functions in a variety of RNA processes, including alternative splicing, RNA stabilization, and RNA editing. Functions as an enzyme-substrate adapter for the cytidine deaminase APOBEC1. With APOBEC1 forms an mRNA editing complex involved into cytidine to uridine editing of a variety of mRNA molecules. Through the binding of their 3'UTR, also stabilizes a variety of mRNAs and regulates the expression of genes such as the interferon alpha/beta receptor and interleukin-10. Also involved in the alternative splicing of several genes including TJP1. Binds the pre-mRNA (U)GCAUG consensus sequences in downstream intronic regions of alternative exons regulating their exclusion and inclusion into mRNAs. Independently of its RNA-binding activity, could negatively regulate MAVS by promoting its lysosomal degradation. This chain is RNA-binding protein 47, found in Rattus norvegicus (Rat).